The chain runs to 432 residues: Amino-acid acetyltransferase (432 aa).

In terms of domain architecture, N-acetyltransferase spans 286-425; it reads EVVREASIED…ASLYNYQRNS (140 aa).

It belongs to the acetyltransferase family. ArgA subfamily.

Its subcellular location is the cytoplasm. It catalyses the reaction L-glutamate + acetyl-CoA = N-acetyl-L-glutamate + CoA + H(+). Its pathway is amino-acid biosynthesis; L-arginine biosynthesis; N(2)-acetyl-L-ornithine from L-glutamate: step 1/4. The chain is Amino-acid acetyltransferase from Pseudomonas putida (strain GB-1).